Consider the following 527-residue polypeptide: Transcription initiation factor TFIID subunit 6b (527 aa).

The Histone-fold domain maps to 3-99 (TKESIEVIAQ…NLEPTSGSKS (97 aa)). Disordered regions lie at residues 410–442 (SPPT…THQP) and 462–492 (MRGT…PKTS). 2 stretches are compositionally biased toward polar residues: residues 416 to 427 (VWKTNGKLTSPR) and 462 to 473 (MRGTTTVPQQSH).

Belongs to the TAF6 family. In terms of assembly, component of the TFIID complex. TFIID is composed of TATA binding protein (TBP) and a number of TBP-associated factors (TAFs) whose MWs range from 14-217 kDa. Interacts with TAF5 and TAF9. Expressed in roots, leaves, inflorescences and siliques.

It is found in the nucleus. In terms of biological role, TAFs are components of the transcription factor IID (TFIID) complex that is essential for mediating regulation of RNA polymerase transcription. Not redundant with TAF6. The polypeptide is Transcription initiation factor TFIID subunit 6b (TAF6B) (Arabidopsis thaliana (Mouse-ear cress)).